The primary structure comprises 427 residues: UPF0229 protein YeaH (427 aa).

Residues Asn-79–Arg-90 are compositionally biased toward basic and acidic residues. The disordered stretch occupies residues Asn-79–Glu-110. Positions Gln-92 to Gln-102 are enriched in gly residues.

This sequence belongs to the UPF0229 family.

This Escherichia coli O9:H4 (strain HS) protein is UPF0229 protein YeaH.